We begin with the raw amino-acid sequence, 559 residues long: Glutamine--tRNA ligase (559 aa).

The 'HIGH' region signature appears at 36 to 46; that stretch reads PEPNGYLHLGH. Residues 37–39 and 43–49 each bind ATP; these read EPN and HLGHAKS. Residues D69 and Y214 each contribute to the L-glutamine site. Residues T233, 263 to 264, and 271 to 273 contribute to the ATP site; these read RL and LSK. Positions 270–274 match the 'KMSKS' region motif; that stretch reads LLSKR.

This sequence belongs to the class-I aminoacyl-tRNA synthetase family. In terms of assembly, monomer.

It is found in the cytoplasm. It catalyses the reaction tRNA(Gln) + L-glutamine + ATP = L-glutaminyl-tRNA(Gln) + AMP + diphosphate. This chain is Glutamine--tRNA ligase, found in Nitrobacter winogradskyi (strain ATCC 25391 / DSM 10237 / CIP 104748 / NCIMB 11846 / Nb-255).